The sequence spans 467 residues: Metal transporter cnnm-4 (467 aa).

Topologically, residues 1–110 (MELYAAGRYD…EIPEGKDKTR (110 aa)) are extracellular. Asparagine 61 carries an N-linked (GlcNAc...) asparagine glycan. A CNNM transmembrane domain is found at 107 to 293 (DKTRVYFMMP…LEDEEAADGN (187 aa)). Residues 111-131 (VYFMMPLLVLCLGLSATFSGL) form a helical membrane-spanning segment. Topologically, residues 132–170 (NLAIMSFSINDLKLIQESDSDKLMKQRAMDVMRLRRNSN) are cytoplasmic. The helical transmembrane segment at 171 to 191 (FVLVTIIFGNCFCNISITLLM) threads the bilayer. Over 192-196 (NYFAE) the chain is Extracellular. Residues 197–217 (FYGFGGFIFVELISTALLLIF) form a helical membrane-spanning segment. At 218-238 (TEILPSLIFTKNALAIASRLQ) the chain is on the cytoplasmic side. Residues 239 to 259 (YFVIFTMCITSPISYPLAMLL) form a helical membrane-spanning segment. The Extracellular segment spans residues 260 to 467 (NIILGKENAD…IFDEKDARQE (208 aa)). 2 CBS domains span residues 317 to 381 (MTEI…GSDT) and 394 to 461 (KRRK…IFDE). A glycan (N-linked (GlcNAc...) asparagine) is linked at asparagine 364.

Belongs to the ACDP family.

Its subcellular location is the cell membrane. Functionally, probable metal transporter. Probably acts redundantly with the other metal transport proteins cnnm-1, cnnm-2, cnnm-3 and cnnm-5 to regulate Mg(2+) homeostasis. The sequence is that of Metal transporter cnnm-4 from Caenorhabditis elegans.